The primary structure comprises 129 residues: Small ribosomal subunit protein uS11 (129 aa).

It belongs to the universal ribosomal protein uS11 family. In terms of assembly, part of the 30S ribosomal subunit. Interacts with proteins S7 and S18. Binds to IF-3.

Located on the platform of the 30S subunit, it bridges several disparate RNA helices of the 16S rRNA. Forms part of the Shine-Dalgarno cleft in the 70S ribosome. This is Small ribosomal subunit protein uS11 from Nitrosomonas europaea (strain ATCC 19718 / CIP 103999 / KCTC 2705 / NBRC 14298).